A 553-amino-acid chain; its full sequence is Membrane protein insertase YidC (553 aa).

Residues 3–23 (IKRTILWVIFSLSVVLLFDNW) form a helical membrane-spanning segment. The interval 44–64 (AAAPGGTPAGDVPKAAAPAAA) is disordered. 4 helical membrane-spanning segments follow: residues 359 to 379 (LLGN…LVFF), 429 to 449 (LGGC…YWVL), 467 to 487 (LASP…MFVQ), and 507 to 527 (PIAF…YWVV).

Belongs to the OXA1/ALB3/YidC family. Type 1 subfamily. In terms of assembly, interacts with the Sec translocase complex via SecD. Specifically interacts with transmembrane segments of nascent integral membrane proteins during membrane integration.

The protein resides in the cell inner membrane. Required for the insertion and/or proper folding and/or complex formation of integral membrane proteins into the membrane. Involved in integration of membrane proteins that insert both dependently and independently of the Sec translocase complex, as well as at least some lipoproteins. Aids folding of multispanning membrane proteins. This is Membrane protein insertase YidC from Ralstonia nicotianae (strain ATCC BAA-1114 / GMI1000) (Ralstonia solanacearum).